Consider the following 294-residue polypeptide: Phosphonoacetaldehyde hydrolase (294 aa).

D19 serves as the catalytic Nucleophile. Mg(2+)-binding residues include D19 and A21. The active-site Schiff-base intermediate with substrate is K60. D193 provides a ligand contact to Mg(2+).

The protein belongs to the HAD-like hydrolase superfamily. PhnX family. As to quaternary structure, homodimer. Mg(2+) serves as cofactor.

The catalysed reaction is phosphonoacetaldehyde + H2O = acetaldehyde + phosphate + H(+). Involved in phosphonate degradation. This is Phosphonoacetaldehyde hydrolase from Hahella chejuensis (strain KCTC 2396).